A 372-amino-acid chain; its full sequence is 4-hydroxy-3-methylbut-2-en-1-yl diphosphate synthase (flavodoxin) (372 aa).

[4Fe-4S] cluster is bound by residues cysteine 270, cysteine 273, cysteine 305, and glutamate 312.

It belongs to the IspG family. It depends on [4Fe-4S] cluster as a cofactor.

It catalyses the reaction (2E)-4-hydroxy-3-methylbut-2-enyl diphosphate + oxidized [flavodoxin] + H2O + 2 H(+) = 2-C-methyl-D-erythritol 2,4-cyclic diphosphate + reduced [flavodoxin]. Its pathway is isoprenoid biosynthesis; isopentenyl diphosphate biosynthesis via DXP pathway; isopentenyl diphosphate from 1-deoxy-D-xylulose 5-phosphate: step 5/6. Its function is as follows. Converts 2C-methyl-D-erythritol 2,4-cyclodiphosphate (ME-2,4cPP) into 1-hydroxy-2-methyl-2-(E)-butenyl 4-diphosphate. This Alteromonas mediterranea (strain DSM 17117 / CIP 110805 / LMG 28347 / Deep ecotype) protein is 4-hydroxy-3-methylbut-2-en-1-yl diphosphate synthase (flavodoxin).